A 351-amino-acid polypeptide reads, in one-letter code: DNA polymerase IV (351 aa).

Residues 4–185 enclose the UmuC domain; it reads IIHVDMDCFY…LPLGKIPGVG (182 aa). Mg(2+) is bound by residues Asp-8 and Asp-103. Glu-104 is a catalytic residue.

This sequence belongs to the DNA polymerase type-Y family. In terms of assembly, monomer. Mg(2+) is required as a cofactor.

It localises to the cytoplasm. The catalysed reaction is DNA(n) + a 2'-deoxyribonucleoside 5'-triphosphate = DNA(n+1) + diphosphate. Functionally, poorly processive, error-prone DNA polymerase involved in untargeted mutagenesis. Copies undamaged DNA at stalled replication forks, which arise in vivo from mismatched or misaligned primer ends. These misaligned primers can be extended by PolIV. Exhibits no 3'-5' exonuclease (proofreading) activity. May be involved in translesional synthesis, in conjunction with the beta clamp from PolIII. The sequence is that of DNA polymerase IV from Citrobacter koseri (strain ATCC BAA-895 / CDC 4225-83 / SGSC4696).